Here is a 404-residue protein sequence, read N- to C-terminus: Probable tRNA sulfurtransferase (404 aa).

Positions Glu61 to Glu166 constitute a THUMP domain. ATP contacts are provided by residues Leu184 to Leu185, His209 to Phe210, Arg266, Gly288, and Gln297.

It belongs to the ThiI family.

The protein resides in the cytoplasm. It carries out the reaction [ThiI sulfur-carrier protein]-S-sulfanyl-L-cysteine + a uridine in tRNA + 2 reduced [2Fe-2S]-[ferredoxin] + ATP + H(+) = [ThiI sulfur-carrier protein]-L-cysteine + a 4-thiouridine in tRNA + 2 oxidized [2Fe-2S]-[ferredoxin] + AMP + diphosphate. The catalysed reaction is [ThiS sulfur-carrier protein]-C-terminal Gly-Gly-AMP + S-sulfanyl-L-cysteinyl-[cysteine desulfurase] + AH2 = [ThiS sulfur-carrier protein]-C-terminal-Gly-aminoethanethioate + L-cysteinyl-[cysteine desulfurase] + A + AMP + 2 H(+). Its pathway is cofactor biosynthesis; thiamine diphosphate biosynthesis. Catalyzes the ATP-dependent transfer of a sulfur to tRNA to produce 4-thiouridine in position 8 of tRNAs, which functions as a near-UV photosensor. Also catalyzes the transfer of sulfur to the sulfur carrier protein ThiS, forming ThiS-thiocarboxylate. This is a step in the synthesis of thiazole, in the thiamine biosynthesis pathway. The sulfur is donated as persulfide by IscS. This Bacillus cereus (strain ZK / E33L) protein is Probable tRNA sulfurtransferase.